We begin with the raw amino-acid sequence, 213 residues long: MHQQKRQPELVEGNLPVFVFPTELIFYADDQSTHKQVLTLYNPYEFALKFKVLCTTPNKYVVVNAAGAVKPQCCVDIVIRHRDVRSCHYGVIDKFRLQVSEQSQRKALGRKEVVATLLPSAKEQQKEEEEKRIKEHLTESLFFEQSFQPENRAVSSGPSLLTVFLGVVCIAALMLPTLGDVESLVPLYLHLSVNQKLVAAYILGLITMAILRT.

The region spanning Pro16–Phe143 is the MSP domain. 2 consecutive transmembrane segments (helical) span residues Ser159–Gly179 and Leu191–Leu211. Residues Leu205–Met208 carry the Nuclear export signal motif.

Its subcellular location is the endoplasmic reticulum membrane. The protein resides in the golgi apparatus membrane. Plays a role in differentiation and/or proliferation of mesenchymal stem cells. Proposed to be involved in epithelial-to-mesenchymal transition (EMT). However, another study suggests that it is not required for EMT or stem cell self-renewal and acts during later stages of differentiation. This chain is Motile sperm domain-containing protein 1 (MOSPD1), found in Pongo abelii (Sumatran orangutan).